Consider the following 592-residue polypeptide: Glutamine-rich protein 2 (592 aa).

A disordered region spans residues 488–592 (QLQQAQHARP…TRGPRSTAAH (105 aa)). Polar residues predominate over residues 544–567 (LQSNVSHSSIPTDIASLQGSQQGL).

Interacts with AKAP3, ODF2 and TSSK4. Interacts with AKAP4. In terms of tissue distribution, expressed in testis. Not detected in heart, brain, kidney, stomach, ovary, liver, lung and uterus.

It localises to the nucleus membrane. It is found in the nucleus. Its subcellular location is the cytoplasm. The protein localises to the cell projection. The protein resides in the cilium. It localises to the flagellum. Its function is as follows. Has an essential role in the formation of sperm flagella and flagellar structure maintainance. It acts as a suppressor of ubiquitination and degradation of proteins involved in flagellar development and motility. In Mus musculus (Mouse), this protein is Glutamine-rich protein 2.